A 593-amino-acid chain; its full sequence is Phosphoinositide phosphatase SAC6 (593 aa).

The SAC domain maps to 128-456 (LSVAERTTGL…GDDISIQYSG (329 aa)). The Phosphatase catalytic core motif lies at 391-402 (RTNCIDCLDRTN). 2 helical membrane-spanning segments follow: residues 526 to 546 (AVAN…FATM) and 555 to 575 (YKHL…AALV).

In terms of tissue distribution, predominantly expressed in flowers.

Its subcellular location is the endoplasmic reticulum membrane. Phosphoinositide phosphatase that hydrolyzes PtdIns(3)P and PtdIns(4)P. Involved in priming for different defense responses. This is Phosphoinositide phosphatase SAC6 (SAC6) from Arabidopsis thaliana (Mouse-ear cress).